Here is a 258-residue protein sequence, read N- to C-terminus: L-aspartate dehydrogenase 1 (258 aa).

Residues Ala-121 and Asn-181 each coordinate NAD(+). His-211 is an active-site residue.

The protein belongs to the L-aspartate dehydrogenase family.

It catalyses the reaction L-aspartate + NADP(+) + H2O = oxaloacetate + NH4(+) + NADPH + H(+). The catalysed reaction is L-aspartate + NAD(+) + H2O = oxaloacetate + NH4(+) + NADH + H(+). The protein operates within cofactor biosynthesis; NAD(+) biosynthesis; iminoaspartate from L-aspartate (dehydrogenase route): step 1/1. In terms of biological role, specifically catalyzes the NAD or NADP-dependent dehydrogenation of L-aspartate to iminoaspartate. This chain is L-aspartate dehydrogenase 1, found in Bordetella parapertussis (strain 12822 / ATCC BAA-587 / NCTC 13253).